Here is a 190-residue protein sequence, read N- to C-terminus: Selenoprotein S (190 aa).

A compositionally biased stretch (basic and acidic residues) spans 1–13 (MEAEDGARVRNED). The tract at residues 1–20 (MEAEDGARVRNEDVPPQNQD) is disordered. A helical membrane pass occupies residues 30-50 (AFMSEYGWYLLFGCVGVYLLI). Residues 58-68 (SSTQTRSSSGS) are compositionally biased toward low complexity. Residues 58-190 (SSTQTRSSSG…RRGPSAGGUG (133 aa)) form a disordered region. The span at 79-120 (RRQEALEASRRRMQEEQDARAAEFREKQRMLEEEKRRQKIEM) shows a compositional bias: basic and acidic residues. Positions 136–151 (VAQQNTEEAASSSSLR) are enriched in polar residues. Residue Sec189 is a non-standard amino acid, selenocysteine.

Belongs to the selenoprotein S family.

Its subcellular location is the endoplasmic reticulum membrane. It localises to the cytoplasm. Involved in the degradation process of misfolded endoplasmic reticulum (ER) luminal proteins. Participates in the transfer of misfolded proteins from the ER to the cytosol, where they are destroyed by the proteasome in a ubiquitin-dependent manner. This Danio rerio (Zebrafish) protein is Selenoprotein S (vimp).